Reading from the N-terminus, the 364-residue chain is Protein LATERAL BRANCHING OXIDOREDUCTASE 1 (364 aa).

The Fe2OG dioxygenase domain occupies arginine 203–proline 312. Fe cation is bound by residues histidine 235, aspartate 237, and histidine 293. Arginine 303 contributes to the 2-oxoglutarate binding site.

It belongs to the iron/ascorbate-dependent oxidoreductase family. As to quaternary structure, monomer. Fe(2+) is required as a cofactor. The cofactor is L-ascorbate. In terms of tissue distribution, expressed in the vasculature throughout the plant and in the buds and root tips.

The protein resides in the cytoplasm. The enzyme catalyses (11R)-methyl carlactonoate + 2-oxoglutarate + O2 = (11R)-hydroxymethyl carlactonoate + succinate + CO2. In terms of biological role, oxoglutarate-dependent dioxygenase involved in the biosynthesis of strigolactone natural products, bioactive compounds promoting plant fitness and soil microbe interactions, but preventing shoot branching. Catalyzes the hydroxylation of (11R)-methyl carlactonoate (MeCLA) to produce (11R)-hydroxymethyl carlactonoate (1'-HO-MeCLA) in final stages of strigolactone biosynthesis, downstream of MAX1 and CLAMT. The sequence is that of Protein LATERAL BRANCHING OXIDOREDUCTASE 1 from Arabidopsis thaliana (Mouse-ear cress).